A 354-amino-acid polypeptide reads, in one-letter code: Uroporphyrinogen decarboxylase (354 aa).

Residues 27–31 (RQAGR), D77, Y154, T209, and H327 each bind substrate.

This sequence belongs to the uroporphyrinogen decarboxylase family. Homodimer.

Its subcellular location is the cytoplasm. It carries out the reaction uroporphyrinogen III + 4 H(+) = coproporphyrinogen III + 4 CO2. The protein operates within porphyrin-containing compound metabolism; protoporphyrin-IX biosynthesis; coproporphyrinogen-III from 5-aminolevulinate: step 4/4. Its function is as follows. Catalyzes the decarboxylation of four acetate groups of uroporphyrinogen-III to yield coproporphyrinogen-III. The sequence is that of Uroporphyrinogen decarboxylase from Mannheimia succiniciproducens (strain KCTC 0769BP / MBEL55E).